Consider the following 357-residue polypeptide: Inositol-tetrakisphosphate 1-kinase 3 (357 aa).

2 residues coordinate 1D-myo-inositol 1,3,4-trisphosphate: Lys56 and Lys98. ATP contacts are provided by Arg133 and Lys183. 2 residues coordinate 1D-myo-inositol 1,3,4-trisphosphate: His190 and Lys222. Residues 211–222 (QEFVNHGGVLFK), Ser237, and Ser262 contribute to the ATP site. Residues Asp302, Asp317, and Asn319 each coordinate Mg(2+). Asn319 provides a ligand contact to 1D-myo-inositol 1,3,4-trisphosphate.

It belongs to the ITPK1 family. As to quaternary structure, monomer. Requires Mg(2+) as cofactor. As to expression, expressed in roots, leaves, flowers, anthers and embryos.

The catalysed reaction is 1D-myo-inositol 3,4,5,6-tetrakisphosphate + ATP = 1D-myo-inositol 1,3,4,5,6-pentakisphosphate + ADP + H(+). It catalyses the reaction 1D-myo-inositol 1,3,4-trisphosphate + ATP = 1D-myo-inositol 1,3,4,5-tetrakisphosphate + ADP + H(+). The enzyme catalyses 1D-myo-inositol 1,3,4-trisphosphate + ATP = 1D-myo-inositol 1,3,4,6-tetrakisphosphate + ADP + H(+). Functionally, kinase that can phosphorylate various inositol polyphosphate such as Ins(3,4,5,6)P4 or Ins(1,3,4)P3 and participates in phytic acid biosynthesis in developing seeds. Phytic acid is the primary storage form of phosphorus in cereal grains and other plant seeds. The chain is Inositol-tetrakisphosphate 1-kinase 3 from Oryza sativa subsp. japonica (Rice).